Reading from the N-terminus, the 100-residue chain is Urease subunit gamma (100 aa).

This sequence belongs to the urease gamma subunit family. Heterotrimer of UreA (gamma), UreB (beta) and UreC (alpha) subunits. Three heterotrimers associate to form the active enzyme.

It localises to the cytoplasm. The catalysed reaction is urea + 2 H2O + H(+) = hydrogencarbonate + 2 NH4(+). The protein operates within nitrogen metabolism; urea degradation; CO(2) and NH(3) from urea (urease route): step 1/1. This Thioalkalivibrio sulfidiphilus (strain HL-EbGR7) protein is Urease subunit gamma.